The following is a 263-amino-acid chain: HTH-type transcriptional repressor NanR (263 aa).

The tract at residues 1-22 (MGLMNAFDSQTEDSSPAIGRNL) is disordered. The HTH gntR-type domain maps to 30-98 (KKLSEMVEEE…NGERARVSRP (69 aa)). Residues 58–77 (ERELMAFFNVGRPSVREALA) constitute a DNA-binding region (H-T-H motif).

It belongs to the NanR family.

Functionally, transcriptional repressor that controls expression of the genes required for the catabolism of sialic acids. This is HTH-type transcriptional repressor NanR from Shigella boydii serotype 4 (strain Sb227).